Here is a 290-residue protein sequence, read N- to C-terminus: Barley B recombinant-like protein C (290 aa).

Disordered regions lie at residues 60 to 90 (PHHH…YGMM) and 102 to 183 (QPEP…RKNI). The segment covering 104–116 (EPQPQLQHPPSPP) has biased composition (pro residues). Positions 138 to 158 (PPKKRQQGRQPKVLRPKKPKK) are enriched in basic residues.

The protein belongs to the BBR/BPC family.

The protein localises to the nucleus. Its function is as follows. Transcriptional regulator that specifically binds to GA-rich elements (GAGA-repeats) present in regulatory sequences of genes involved in developmental processes. This Oryza sativa subsp. japonica (Rice) protein is Barley B recombinant-like protein C.